Reading from the N-terminus, the 374-residue chain is Probable quinol oxidase subunit 2 (374 aa).

The first 19 residues, 1 to 19, serve as a signal peptide directing secretion; sequence MSKFKSLLLLFGTLILLSG. A lipid anchor (N-palmitoyl cysteine) is attached at Cys20. Cys20 carries the S-diacylglycerol cysteine lipid modification. A run of 2 helical transmembrane segments spans residues 43–63 and 82–102; these read SIIF…IFIF and IETI…IPTV. The segment at 317–374 is disordered; that stretch reads ERHGMKPMILGNNEKYDNEFKKEEDHNSKEMEKISKGAKDENASKLHKKEHDDHGGGH. Over residues 330–374 the composition is skewed to basic and acidic residues; sequence EKYDNEFKKEEDHNSKEMEKISKGAKDENASKLHKKEHDDHGGGH.

The protein belongs to the cytochrome c oxidase subunit 2 family.

It localises to the cell membrane. It catalyses the reaction 2 a quinol + O2 = 2 a quinone + 2 H2O. Catalyzes quinol oxidation with the concomitant reduction of oxygen to water. Subunit II transfers the electrons from a quinol to the binuclear center of the catalytic subunit I. The chain is Probable quinol oxidase subunit 2 (qoxA) from Staphylococcus epidermidis (strain ATCC 12228 / FDA PCI 1200).